Consider the following 226-residue polypeptide: Ribose-5-phosphate isomerase A (226 aa).

Substrate is bound by residues 26–29 (TGST), 82–85 (DGAD), and 95–98 (KGGG). The Proton acceptor role is filled by E104. K122 lines the substrate pocket.

The protein belongs to the ribose 5-phosphate isomerase family. In terms of assembly, homodimer.

The catalysed reaction is aldehydo-D-ribose 5-phosphate = D-ribulose 5-phosphate. Its pathway is carbohydrate degradation; pentose phosphate pathway; D-ribose 5-phosphate from D-ribulose 5-phosphate (non-oxidative stage): step 1/1. Its function is as follows. Catalyzes the reversible conversion of ribose-5-phosphate to ribulose 5-phosphate. This is Ribose-5-phosphate isomerase A from Streptococcus thermophilus (strain CNRZ 1066).